A 318-amino-acid chain; its full sequence is Protoheme IX farnesyltransferase (318 aa).

Helical transmembrane passes span 31-51, 55-75, 98-118, 125-145, 153-173, 181-201, 206-228, 238-260, and 285-305; these read IILL…QGPL, LAIA…TLNC, IQPF…FILL, LAAG…THGL, IVIG…AVTG, ILFA…ALMI, AAVK…QILA, LALA…LLGL, and FSIF…LPGA.

It belongs to the UbiA prenyltransferase family. Protoheme IX farnesyltransferase subfamily.

It localises to the cell inner membrane. It carries out the reaction heme b + (2E,6E)-farnesyl diphosphate + H2O = Fe(II)-heme o + diphosphate. Its pathway is porphyrin-containing compound metabolism; heme O biosynthesis; heme O from protoheme: step 1/1. Converts heme B (protoheme IX) to heme O by substitution of the vinyl group on carbon 2 of heme B porphyrin ring with a hydroxyethyl farnesyl side group. The protein is Protoheme IX farnesyltransferase of Synechococcus elongatus (strain ATCC 33912 / PCC 7942 / FACHB-805) (Anacystis nidulans R2).